We begin with the raw amino-acid sequence, 312 residues long: Acetyl-coenzyme A carboxylase carboxyl transferase subunit alpha (312 aa).

Residues 36-286 (RLDKEVKSIY…KEYFLDALRT (251 aa)) enclose the CoA carboxyltransferase C-terminal domain.

Belongs to the AccA family. In terms of assembly, acetyl-CoA carboxylase is a heterohexamer composed of biotin carboxyl carrier protein (AccB), biotin carboxylase (AccC) and two subunits each of ACCase subunit alpha (AccA) and ACCase subunit beta (AccD).

The protein localises to the cytoplasm. It carries out the reaction N(6)-carboxybiotinyl-L-lysyl-[protein] + acetyl-CoA = N(6)-biotinyl-L-lysyl-[protein] + malonyl-CoA. It participates in lipid metabolism; malonyl-CoA biosynthesis; malonyl-CoA from acetyl-CoA: step 1/1. Its function is as follows. Component of the acetyl coenzyme A carboxylase (ACC) complex. First, biotin carboxylase catalyzes the carboxylation of biotin on its carrier protein (BCCP) and then the CO(2) group is transferred by the carboxyltransferase to acetyl-CoA to form malonyl-CoA. The polypeptide is Acetyl-coenzyme A carboxylase carboxyl transferase subunit alpha (Helicobacter pylori (strain J99 / ATCC 700824) (Campylobacter pylori J99)).